Here is a 433-residue protein sequence, read N- to C-terminus: Pyroglutamylated RF-amide peptide receptor (433 aa).

Over 1 to 46 (MQALNITAEQFSRLLSAHNLTREQFIHRYGLRPLVYTPELPARAKL) the chain is Extracellular. 2 N-linked (GlcNAc...) asparagine glycosylation sites follow: N5 and N19. A helical membrane pass occupies residues 47-67 (AFALAGALIFALALFGNSLVI). Over 68–81 (YVVTRSKAMRTVTN) the chain is Cytoplasmic. Residues 82-102 (IFICSLALSDLLIAFFCIPVT) traverse the membrane as a helical segment. Over 103-120 (MLQNISDKWLGGAFICKM) the chain is Extracellular. A helical membrane pass occupies residues 121-141 (VPFVQSTAVVTEILTMTCIAV). The Cytoplasmic segment spans residues 142-162 (ERHQGLIHPFKMKWQYTTRRA). Residues 163 to 183 (FTILGVVWLAAIIVGSPMWHV) form a helical membrane-spanning segment. The Extracellular portion of the chain corresponds to 184-212 (QRLEIKYDFLYEKEHVCCLEEWASPMHQR). Residues 213–233 (IYTTFILVILFLLPLVVMLVL) form a helical membrane-spanning segment. Residues 234–271 (YSKIGYELWIKKRVGDSSALQTIHGKEMSKIARKKKRA) lie on the Cytoplasmic side of the membrane. The chain crosses the membrane as a helical span at residues 272–292 (VVMMVTVVALFAACWAPFHVV). Residues 293 to 313 (HMMVEYSNFEKEYDDVTIKMV) lie on the Extracellular side of the membrane. A helical membrane pass occupies residues 314–334 (FAVAQTIGFFNSICNPFVYAF). The Cytoplasmic portion of the chain corresponds to 335–433 (MNENFKKNFL…NSTFGSGHEL (99 aa)).

This sequence belongs to the G-protein coupled receptor 1 family. In terms of tissue distribution, expressed widely in the brain with high levels in the cortex and hypothalamus, and moderate levels in the brain stem, caudate nucleus, midbrain hippocampus, thalamus, trigeminal ganglia and spinal cord. Particularly strong expression detected in the mitral cell layer of the olfactory bulb, accessory olfactory bulb, island of Calleja and nucleus of the solitary tract. In peripheral tissues, expressed at moderate levels in the eye, liver, kidney, pituitary gland, testis and thymus.

Its subcellular location is the cell membrane. Receptor for the orexigenic neuropeptide QRFP. The activity of this receptor is mediated by G proteins that modulate adenylate cyclase activity and intracellular calcium levels. The chain is Pyroglutamylated RF-amide peptide receptor (Qrfpr) from Mus musculus (Mouse).